A 362-amino-acid chain; its full sequence is Protein RecA (362 aa).

ATP is bound at residue 67-74 (GPESSGKT). The span at 337–356 (VADAPADSAPAPVAAVAPKA) shows a compositional bias: low complexity. The interval 337–362 (VADAPADSAPAPVAAVAPKASARKSA) is disordered.

The protein belongs to the RecA family.

The protein localises to the cytoplasm. In terms of biological role, can catalyze the hydrolysis of ATP in the presence of single-stranded DNA, the ATP-dependent uptake of single-stranded DNA by duplex DNA, and the ATP-dependent hybridization of homologous single-stranded DNAs. It interacts with LexA causing its activation and leading to its autocatalytic cleavage. This is Protein RecA from Clavibacter michiganensis subsp. michiganensis (strain NCPPB 382).